The chain runs to 416 residues: MELRVGNKYRLGRKIGSGSFGDIYLGANIATGEEVAIKLECVKTKHPQLHIESKFYKMMQGGVGIPSIKWCGAEGDYNVMVMELLGPSLEDLFNFCSRKFSLKTVLLLADQMISRIEYIHSKNFIHRDVKPDNFLMGLGKKGNLVYIIDFGLAKKYRDARTHQHIPYRENKNLTGTARYASINTHLGIEQSRRDDLESLGYVLMYFNLGSLPWQGLKAATKRQKYERISEKKMSTPIEVLCKGYPSEFSTYLNFCRSLRFDDKPDYSYLRQLFRNLFHRQGFSYDYVFDWNMLKFGAARNPEDMDRERREHEREERMGQLRGSATRALPPGPPAGATGNRLRNVAEPMASTPTSRIQQSGNTSPRAISRVDRERKVSMRLHRGAPANVSSSDLTGRQEVSRISASQTSVPFDHLGK.

Residues 9 to 277 (YRLGRKIGSG…YLRQLFRNLF (269 aa)) enclose the Protein kinase domain. ATP-binding positions include 15-23 (IGSGSFGDI) and lysine 38. Aspartate 128 acts as the Proton acceptor in catalysis. Positions 301 to 318 (PEDMDRERREHEREERMG) are enriched in basic and acidic residues. The disordered stretch occupies residues 301–416 (PEDMDRERRE…TSVPFDHLGK (116 aa)). A compositionally biased stretch (low complexity) spans 324–338 (ATRALPPGPPAGATG). Polar residues-rich tracts occupy residues 350 to 365 (STPT…TSPR) and 400 to 409 (SRISASQTSV).

This sequence belongs to the protein kinase superfamily. CK1 Ser/Thr protein kinase family. Casein kinase I subfamily. Monomer. Component of the circadian core oscillator, which includes the CRY proteins, CLOCK, or NPAS2, BMAL1 or BMAL2, CSNK1E, and the PER proteins.

The protein localises to the cytoplasm. It carries out the reaction L-seryl-[protein] + ATP = O-phospho-L-seryl-[protein] + ADP + H(+). It catalyses the reaction L-threonyl-[protein] + ATP = O-phospho-L-threonyl-[protein] + ADP + H(+). Its function is as follows. Casein kinases are operationally defined by their preferential utilization of acidic proteins such as caseins as substrates. Can phosphorylate a large number of proteins. Participates in Wnt signaling. Phosphorylates DVL1. Central component of the circadian clock. May act as a negative regulator of circadian rhythmicity by phosphorylating PER1 and PER2. Retains PER1 in the cytoplasm. The sequence is that of Casein kinase I isoform epsilon (CSNK1E) from Gallus gallus (Chicken).